A 402-amino-acid chain; its full sequence is Phosphoglycerate kinase (402 aa).

Substrate-binding positions include 30 to 32 (DFN), R46, 70 to 73 (HLGR), R126, and R159. ATP is bound by residues K210, E332, and 358 to 361 (GGDT).

Belongs to the phosphoglycerate kinase family. In terms of assembly, monomer.

Its subcellular location is the cytoplasm. The catalysed reaction is (2R)-3-phosphoglycerate + ATP = (2R)-3-phospho-glyceroyl phosphate + ADP. It participates in carbohydrate degradation; glycolysis; pyruvate from D-glyceraldehyde 3-phosphate: step 2/5. The sequence is that of Phosphoglycerate kinase from Helicobacter hepaticus (strain ATCC 51449 / 3B1).